A 258-amino-acid polypeptide reads, in one-letter code: Snake venom serine protease 5 (258 aa).

Residues 1–18 (MVLIRVLANLLILQLSYA) form the signal peptide. The propeptide occupies 19-24 (QKSSEL). Residues 25–249 (VVGGRPCNIN…HLDWIQNIIA (225 aa)) form the Peptidase S1 domain. Cystine bridges form between cysteine 31–cysteine 163, cysteine 50–cysteine 66, cysteine 98–cysteine 256, cysteine 142–cysteine 210, cysteine 174–cysteine 189, and cysteine 200–cysteine 225. An N-linked (GlcNAc...) asparagine glycan is attached at asparagine 44. The active-site Charge relay system is histidine 65. Residue asparagine 103 is glycosylated (N-linked (GlcNAc...) asparagine). Aspartate 110 (charge relay system) is an active-site residue. 4 N-linked (GlcNAc...) asparagine glycosylation sites follow: asparagine 121, asparagine 122, asparagine 154, and asparagine 170. Catalysis depends on serine 204, which acts as the Charge relay system. Asparagine 251 carries an N-linked (GlcNAc...) asparagine glycan.

It belongs to the peptidase S1 family. Snake venom subfamily. In terms of assembly, monomer. In terms of tissue distribution, expressed by the venom gland.

The protein resides in the secreted. Functionally, snake venom serine protease that may act in the hemostasis system of the prey. In Trimeresurus stejnegeri (Chinese green tree viper), this protein is Snake venom serine protease 5.